Here is a 260-residue protein sequence, read N- to C-terminus: UPF0246 protein Bxeno_A1262 (260 aa).

This sequence belongs to the UPF0246 family.

This Paraburkholderia xenovorans (strain LB400) protein is UPF0246 protein Bxeno_A1262.